The chain runs to 946 residues: Bifunctional glutamine synthetase adenylyltransferase/adenylyl-removing enzyme (946 aa).

The interval Met1–Glu440 is adenylyl removase. An adenylyl transferase region spans residues Ser449–Glu946.

This sequence belongs to the GlnE family. Mg(2+) serves as cofactor.

It catalyses the reaction [glutamine synthetase]-O(4)-(5'-adenylyl)-L-tyrosine + phosphate = [glutamine synthetase]-L-tyrosine + ADP. It carries out the reaction [glutamine synthetase]-L-tyrosine + ATP = [glutamine synthetase]-O(4)-(5'-adenylyl)-L-tyrosine + diphosphate. Its function is as follows. Involved in the regulation of glutamine synthetase GlnA, a key enzyme in the process to assimilate ammonia. When cellular nitrogen levels are high, the C-terminal adenylyl transferase (AT) inactivates GlnA by covalent transfer of an adenylyl group from ATP to specific tyrosine residue of GlnA, thus reducing its activity. Conversely, when nitrogen levels are low, the N-terminal adenylyl removase (AR) activates GlnA by removing the adenylyl group by phosphorolysis, increasing its activity. The regulatory region of GlnE binds the signal transduction protein PII (GlnB) which indicates the nitrogen status of the cell. The protein is Bifunctional glutamine synthetase adenylyltransferase/adenylyl-removing enzyme of Shigella boydii serotype 4 (strain Sb227).